A 657-amino-acid polypeptide reads, in one-letter code: Endoplasmic reticulum chaperone BiP homolog (657 aa).

The first 17 residues, 1–17 (MKVFSLILIAFVANAYC), serve as a signal peptide directing secretion. Residues 38-41 (GTTY), K99, 229-231 (GGT), 295-302 (EKAKRALS), and 366-369 (GSTR) each bind ATP. Residues 128 to 282 (KPNVEVKVGS…KKKSGKDLRK (155 aa)) form a nucleotide-binding (NBD) region. Residues 402-502 (VQAGVIGGVE…PRGVPQIEVT (101 aa)) form a substrate-binding (SBD) region. Residues 607–657 (LGSNQDASTEENKEQKKELESVVQPIVSKLYSAGGQGEQASEEPSEDHDEL) are disordered. Over residues 616-626 (EENKEQKKELE) the composition is skewed to basic and acidic residues. Acidic residues predominate over residues 646 to 657 (ASEEPSEDHDEL). The Prevents secretion from ER signature appears at 654–657 (HDEL).

This sequence belongs to the heat shock protein 70 family.

The protein resides in the endoplasmic reticulum lumen. It catalyses the reaction ATP + H2O = ADP + phosphate + H(+). The chaperone activity is regulated by ATP-induced allosteric coupling of the nucleotide-binding (NBD) and substrate-binding (SBD) domains. In the ADP-bound and nucleotide-free (apo) states, the two domains have little interaction. In contrast, in the ATP-bound state the two domains are tightly coupled, which results in drastically accelerated kinetics in both binding and release of polypeptide substrates. J domain-containing co-chaperones stimulate the ATPase activity and are required for efficient substrate recognition. Endoplasmic reticulum chaperone that plays a key role in protein folding and quality control in the endoplasmic reticulum lumen. Required for ER dynamics during the first embryonic cell divisions. Specifically, controls ER transition into sheet-like structures at the onset of mitosis, possibly by regulating homotypic membrane fusion. In Caenorhabditis elegans, this protein is Endoplasmic reticulum chaperone BiP homolog (hsp-4).